The chain runs to 76 residues: Omega-conotoxin-like TeA61 (76 aa).

The N-terminal stretch at Met-1–Ala-22 is a signal peptide. The propeptide occupies Asp-23 to Arg-51. 3 cysteine pairs are disulfide-bonded: Cys-52/Cys-67, Cys-59/Cys-70, and Cys-66/Cys-75.

The protein belongs to the conotoxin O1 superfamily. Expressed by the venom duct.

It is found in the secreted. In terms of biological role, omega-conotoxins act at presynaptic membranes, they bind and block voltage-gated calcium channels (Cav). This chain is Omega-conotoxin-like TeA61, found in Conus textile (Cloth-of-gold cone).